The primary structure comprises 137 residues: Nucleoside diphosphate kinase (137 aa).

Residues lysine 9, phenylalanine 58, arginine 86, threonine 92, arginine 103, and asparagine 113 each contribute to the ATP site. Histidine 121 functions as the Pros-phosphohistidine intermediate in the catalytic mechanism.

It belongs to the NDK family. Homotetramer. It depends on Mg(2+) as a cofactor.

It is found in the cytoplasm. It carries out the reaction a 2'-deoxyribonucleoside 5'-diphosphate + ATP = a 2'-deoxyribonucleoside 5'-triphosphate + ADP. It catalyses the reaction a ribonucleoside 5'-diphosphate + ATP = a ribonucleoside 5'-triphosphate + ADP. Major role in the synthesis of nucleoside triphosphates other than ATP. The ATP gamma phosphate is transferred to the NDP beta phosphate via a ping-pong mechanism, using a phosphorylated active-site intermediate. This chain is Nucleoside diphosphate kinase, found in Streptococcus pneumoniae (strain P1031).